We begin with the raw amino-acid sequence, 561 residues long: uncharacterized protein (561 aa).

The stretch at 187 to 217 (DDEELSEEEILNRIDKLQIELEQVIGKQKNI) forms a coiled coil.

This is an uncharacterized protein from Dictyostelium discoideum (Social amoeba).